Here is a 391-residue protein sequence, read N- to C-terminus: Ferrochelatase (391 aa).

Histidine 196 and glutamate 281 together coordinate Fe cation.

It belongs to the ferrochelatase family.

Its subcellular location is the cytoplasm. It catalyses the reaction heme b + 2 H(+) = protoporphyrin IX + Fe(2+). The protein operates within porphyrin-containing compound metabolism; protoheme biosynthesis; protoheme from protoporphyrin-IX: step 1/1. Catalyzes the ferrous insertion into protoporphyrin IX. The chain is Ferrochelatase from Synechococcus sp. (strain CC9311).